A 254-amino-acid chain; its full sequence is Proteasome activator complex subunit 3 (254 aa).

An N6-acetyllysine mark is found at Lys-6 and Lys-14. N6-acetyllysine; by P300/CBP is present on Lys-195.

As to quaternary structure, homoheptamer. Post-translationally, acetylation at the major site Lys-195 is important for oligomerization and ability to degrade its target substrates. Deacetylated by SIRT1.

Functionally, implicated in immunoproteasome assembly and required for efficient antigen processing. The PA28 activator complex enhances the generation of class I binding peptides by altering the cleavage pattern of the proteasome. The sequence is that of Proteasome activator complex subunit 3 from Gallus gallus (Chicken).